Reading from the N-terminus, the 1057-residue chain is Collagen alpha-1(I) chain (1057 aa).

At Q1 the chain carries Pyrrolidone carboxylic acid. A compositionally biased stretch (basic and acidic residues) spans 1–10 (QLSYGYDEKS). The nonhelical region (N-terminal) stretch occupies residues 1–17 (QLSYGYDEKSAGGISVP). The segment at 1 to 1057 (QLSYGYDEKS…AHDGGRYYRA (1057 aa)) is disordered. K9 bears the Allysine mark. S10 is modified (phosphoserine). Collagen-like domains are found at residues 18–76 (GPMG…EAGK), 75–134 (GKPG…PGEN), 135–193 (GAPG…AKGE), and 195–252 (GPQG…GFPG). The triple-helical region stretch occupies residues 18–1031 (GPMGPSGPRG…PGPPGPPGPP (1014 aa)). 4-hydroxyproline is present on residues P29, P32, P35, P44, P47, P50, P65, P80, P86, P95, and P101. The segment covering 37-56 (PQGFQGPPGEPGEPGASGPM) has biased composition (low complexity). The span at 68–82 (NGDDGEAGKPGRPGE) shows a compositional bias: basic and acidic residues. K104 is modified (5-hydroxylysine; alternate). K104 carries an O-linked (Gal...) hydroxylysine; alternate glycan. A Phosphoserine modification is found at S110. Residues 118–134 (DAGPAGPKGEPGSPGEN) show a composition bias toward low complexity. 5 positions are modified to 4-hydroxyproline: P128, P131, P137, P146, and P152. Over residues 157–170 (PAGARGNDGATGAA) the composition is skewed to low complexity. Pro residues predominate over residues 172 to 184 (PPGPTGPAGPPGF). A 4-hydroxyproline mark is found at P173, P182, P185, P212, P215, P227, P233, P242, P248, P251, and P266. Residues 218 to 269 (AGAAGPAGNPGADGQPGAKGANGAPGIAGAPGFPGARGPAGPQGPSGAPGPK) are compositionally biased toward low complexity. K269 is modified (5-hydroxylysine). P275, P278, P290, P292, P299, P314, P320, P323, P329, and P335 each carry 4-hydroxyproline. Over residues 287 to 296 (KGEPGPIGIQ) the composition is skewed to low complexity. The segment covering 324–333 (GERGGPGSRG) has biased composition (gly residues). The residue at position 344 (K344) is a 5-hydroxylysine. P353, P362, P368, P374, P383, P386, P395, P404, P410, P422, P431, P440, P443, P461, P479, P485, P491, P497, P503, P509, P521, P530, P542, P554, P557, P563, P569, and P578 each carry 4-hydroxyproline. The segment covering 377–403 (KGLTGSPGSPGPDGKTGPPGPAGQDGR) has biased composition (low complexity). Over residues 412–431 (ARGQAGVMGFPGPKGAAGEP) the composition is skewed to low complexity. The segment covering 473–500 (QGPAGSPGFQGLPGPAGPPGEAGKPGEQ) has biased composition (low complexity). Collagen-like domains are found at residues 522 to 579 (GERG…GLPG) and 555 to 613 (GAPG…PPGP). Positions 539 to 566 (NGAPGNDGAKGDAGAPGAPGSQGAPGLQ) are enriched in low complexity. K590 is modified (5-hydroxylysine). 3 positions are modified to 4-hydroxyproline: P596, P611, and P617. Collagen-like domains lie at 618-676 (GDKG…AKGD) and 678-736 (GPPG…PPGP). Over residues 623–637 (AGPSGPAGPTGARGA) the composition is skewed to low complexity. S626 is modified (phosphoserine). P638, P644, P647, P656, P662, P680, P689, and P698 each carry 4-hydroxyproline. Positions 650-677 (AGFAGPPGADGQPGAKGEPGDAGAKGDA) are enriched in low complexity. At K701 the chain carries 5-hydroxylysine. Positions 706–722 (SAGPPGATGFPGAAGRV) are enriched in low complexity. 4-hydroxyproline is present on residues P710 and P716. Residue P724 is modified to 3-hydroxyproline. 8 positions are modified to 4-hydroxyproline: P725, P734, P737, P758, P764, P767, P776, and P785. Positions 751–760 (ETGPAGRPGE) are enriched in low complexity. A compositionally biased stretch (low complexity) spans 770–785 (AGEKGSPGADGPAGAP). The span at 789–798 (GPQGIGGQRG) shows a compositional bias: gly residues. 4-hydroxyproline is present on residues P803, P812, P815, P821, P836, P842, P848, P857, P863, and P869. The Collagen-like 9 domain maps to 804–861 (GQRGERGFPGLPGPSGEPGKQGPSGSSGERGPPGPAGPPGLAGPPGESGREGAPGAEG). A compositionally biased stretch (pro residues) spans 835 to 845 (PPGPAGPPGLA). A 5-hydroxylysine modification is found at K872. Pro residues predominate over residues 881–896 (SGPPGAPGAPGAPGPV). Residues P884, P887, and P890 each carry the 4-hydroxyproline modification. The span at 917–931 (AGPAGVRGPAGPQGP) shows a compositional bias: low complexity. 2 Collagen-like domains span residues 918–976 (GPAG…ASGP) and 972–1030 (GASG…PPGP). Positions 932-946 (RGDKGETGEQGDRGL) are enriched in basic and acidic residues. Position 935 is a 5-hydroxylysine (K935). A 5-hydroxylysine; alternate modification is found at K947. An O-linked (Gal...) hydroxylysine; alternate glycan is attached at K947. A 4-hydroxyproline mark is found at P959, P962, P965, P983, P998, and P1001. The span at 965–997 (PGEQGPSGASGPAGPRGPPGSAGAPGKDGLNGL) shows a compositional bias: low complexity. The residue at position 1003 (P1003) is a 3-hydroxyproline. P1004 is modified (4-hydroxyproline). Residues 1016–1031 (VGPPGPPGPPGPPGPP) are compositionally biased toward pro residues. P1018 is subject to 3-hydroxyproline. P1019 is modified (4-hydroxyproline). Position 1021 is a 3-hydroxyproline (P1021). P1022 is modified (4-hydroxyproline). P1024 carries the post-translational modification 3-hydroxyproline. 3 positions are modified to 4-hydroxyproline: P1025, P1028, and P1031. The tract at residues 1032–1055 (SGAFDFSFLPQPPQEKAHDGGRYY) is nonhelical region (C-terminal). Residues 1046–1057 (EKAHDGGRYYRA) show a composition bias toward basic and acidic residues. Position 1047 is an allysine (K1047).

Belongs to the fibrillar collagen family. In terms of assembly, trimers of one alpha 2(I) and two alpha 1(I) chains. Post-translationally, contains mostly 4-hydroxyproline. Proline residues at the third position of the tripeptide repeating unit (G-X-Y) are hydroxylated in some or all of the chains. Contains 3-hydroxyproline at a few sites. This modification occurs on the first proline residue in the sequence motif Gly-Pro-Hyp, where Hyp is 4-hydroxyproline. In terms of processing, lysine residues at the third position of the tripeptide repeating unit (G-X-Y) are 5-hydroxylated in some or all of the chains. Post-translationally, O-glycosylated on hydroxylated lysine residues. The O-linked glycan consists of a Glc-Gal disaccharide.

Its subcellular location is the secreted. The protein resides in the extracellular space. It localises to the extracellular matrix. Type I collagen is a member of group I collagen (fibrillar forming collagen). This chain is Collagen alpha-1(I) chain (COL1A1), found in Mammut americanum (American mastodon).